We begin with the raw amino-acid sequence, 310 residues long: NAD kinase 1 (310 aa).

Residue Asp-68 is the Proton acceptor of the active site. NAD(+) is bound by residues 68-69 (DG), 145-146 (NE), Arg-156, His-175, and Asp-177.

The protein belongs to the NAD kinase family. The cofactor is a divalent metal cation.

The protein localises to the cytoplasm. It carries out the reaction NAD(+) + ATP = ADP + NADP(+) + H(+). Involved in the regulation of the intracellular balance of NAD and NADP, and is a key enzyme in the biosynthesis of NADP. Catalyzes specifically the phosphorylation on 2'-hydroxyl of the adenosine moiety of NAD to yield NADP. The sequence is that of NAD kinase 1 from Gloeobacter violaceus (strain ATCC 29082 / PCC 7421).